Reading from the N-terminus, the 328-residue chain is Malate dehydrogenase (328 aa).

Residue 11-17 (GAAGQIG) coordinates NAD(+). Arginine 92 and arginine 98 together coordinate substrate. NAD(+)-binding positions include asparagine 105, glutamine 112, and 129–131 (VGN). Substrate is bound by residues asparagine 131 and arginine 162. Histidine 187 serves as the catalytic Proton acceptor.

Belongs to the LDH/MDH superfamily. MDH type 2 family.

It catalyses the reaction (S)-malate + NAD(+) = oxaloacetate + NADH + H(+). Functionally, catalyzes the reversible oxidation of malate to oxaloacetate. This is Malate dehydrogenase from Coxiella burnetii (strain RSA 493 / Nine Mile phase I).